Here is a 393-residue protein sequence, read N- to C-terminus: Probable acetyl-CoA acetyltransferase (393 aa).

The Acyl-thioester intermediate role is filled by C88. Catalysis depends on proton acceptor residues H349 and C379.

Belongs to the thiolase-like superfamily. Thiolase family.

It carries out the reaction 2 acetyl-CoA = acetoacetyl-CoA + CoA. This chain is Probable acetyl-CoA acetyltransferase (fadA4), found in Mycobacterium leprae (strain TN).